Consider the following 625-residue polypeptide: MDIIGRAKKELAEYVAAQLGISEEEVFKNITYPPREELGDLSLALPSLIKGNINEKAKLLQEYKGELIERIEVAGIYLNARLNLRNIFVSIFSKLDDSYGLEKIEKPKRIVVEHTSANPIHPLHIGHLRNTILGDALARALKARGHSVNVRFYVNDTGRQVAVLIYGLKLLGFPDPEPNVKKDLWLGIIYAMTNVILEIRKLREELKKLSESEYREKVRELDELIVIANDLRNRNEVLFDKLADAINAKEEPEKEIGEIIKKYEEGNDELKGIIRKYISYALEGFSETLSKLNIRFDNFDYESDLLWENMVNEVLKALLSSSAKIPYKGVIALDLDSFLGDEARSKLRIPKGLKIPPLVLMRSDGTTLYTVRDIAYTIFKFNQFNADFVINVIAEEQYIPQIQLRGALELLGYSRFAENLLHYSYGMVNIQGLRMSGRLGKIITIDEIYEKLDNIVRNKLKEKGGNMENIDDIANAALRYAILSVSANKPLSFDLNRITSFEQNSGPYLQYTYARAANILAKSTENLSMDKVDFSDLVGDKRNILILIAKFPEVFKNAVDNLRLEDLVAFLRELSDIFNSWYDKERVLQEQDPRKRMLRLYIVKGVSVVLKNGLSVLGIRSLERM.

Positions 117-127 (ANPIHPLHIGH) match the 'HIGH' region motif.

Belongs to the class-I aminoacyl-tRNA synthetase family.

Its subcellular location is the cytoplasm. The enzyme catalyses tRNA(Arg) + L-arginine + ATP = L-arginyl-tRNA(Arg) + AMP + diphosphate. In Saccharolobus solfataricus (strain ATCC 35092 / DSM 1617 / JCM 11322 / P2) (Sulfolobus solfataricus), this protein is Arginine--tRNA ligase.